The primary structure comprises 615 residues: Elongation factor 4 (615 aa).

The tr-type G domain maps to 14 to 200 (QQIRNFCIIA…KVAELIPAPT (187 aa)). GTP-binding positions include 26 to 31 (DHGKST) and 147 to 150 (NKID).

This sequence belongs to the TRAFAC class translation factor GTPase superfamily. Classic translation factor GTPase family. LepA subfamily.

Its subcellular location is the cell membrane. The enzyme catalyses GTP + H2O = GDP + phosphate + H(+). Required for accurate and efficient protein synthesis under certain stress conditions. May act as a fidelity factor of the translation reaction, by catalyzing a one-codon backward translocation of tRNAs on improperly translocated ribosomes. Back-translocation proceeds from a post-translocation (POST) complex to a pre-translocation (PRE) complex, thus giving elongation factor G a second chance to translocate the tRNAs correctly. Binds to ribosomes in a GTP-dependent manner. The protein is Elongation factor 4 of Corynebacterium diphtheriae (strain ATCC 700971 / NCTC 13129 / Biotype gravis).